Reading from the N-terminus, the 297-residue chain is HTH-type transcriptional regulator ArgP (297 aa).

The region spanning 4–60 (PDYRTLQALDAVIRERGFERAAQKLCITQSAVSQRIKQLENMFGQPLLVRTVPPRPT) is the HTH lysR-type domain. Residues 21–40 (FERAAQKLCITQSAVSQRIK) constitute a DNA-binding region (H-T-H motif).

Belongs to the LysR transcriptional regulatory family. In terms of assembly, homodimer.

Controls the transcription of genes involved in arginine and lysine metabolism. The protein is HTH-type transcriptional regulator ArgP of Salmonella dublin (strain CT_02021853).